A 664-amino-acid chain; its full sequence is Cyclic nucleotide-gated channel alpha-2 (664 aa).

Over residues M1–K10 the composition is skewed to polar residues. The interval M1 to P61 is disordered. Residues M1–L146 are Cytoplasmic-facing. Residues F147 to D168 traverse the membrane as a helical segment. At L169–L178 the chain is on the extracellular side. A helical membrane pass occupies residues V179–G199. At F200 to K224 the chain is on the cytoplasmic side. Residues L225–H243 traverse the membrane as a helical segment. Residues S244–R248 lie on the Extracellular side of the membrane. The helical transmembrane segment at F249–T267 threads the bilayer. Residues R268–I274 are Cytoplasmic-facing. An ion conduction pathway region spans residues P272 to M380. Residues F275 to I298 form a helical membrane-spanning segment. Topologically, residues S299–Y321 are extracellular. 2 helical membrane passes run L322–I356 and F357–N381. A selectivity filter region spans residues T339 to E342. A C-linker region spans residues A382–Q458. Over A382–E664 the chain is Cytoplasmic. The tract at residues A462–K582 is cyclic nucleotide-binding domain. 3',5'-cyclic GMP-binding residues include G522, S525, R538, and T539. 3',5'-cyclic AMP contacts are provided by R538 and T539. Residues V599 to D653 adopt a coiled-coil conformation.

The protein belongs to the cyclic nucleotide-gated cation channel (TC 1.A.1.5) family. CNGA2 subfamily. In terms of assembly, the olfactory cyclic nucleotide-gated channel is an heterotetramer composed of CNGA2, CNGA4 and CNGB1b subunits with 2:1:1 stoichiometry.

Its subcellular location is the cell projection. The protein localises to the cilium membrane. It catalyses the reaction Ca(2+)(in) = Ca(2+)(out). The enzyme catalyses Na(+)(in) = Na(+)(out). The catalysed reaction is K(+)(in) = K(+)(out). It carries out the reaction NH4(+)(in) = NH4(+)(out). It catalyses the reaction Rb(+)(in) = Rb(+)(out). The enzyme catalyses Li(+)(in) = Li(+)(out). The catalysed reaction is Cs(+)(in) = Cs(+)(out). In terms of biological role, pore-forming subunit of the olfactory cyclic nucleotide-gated channel. Operates in the cilia of olfactory sensory neurons where chemical stimulation of the odorant is converted to an electrical signal. Mediates odorant-induced cAMP-dependent Ca(2+) influx triggering neuron depolarization. The rise of intracellular Ca(2+) levels potentiates the olfactory response by activating Ca(2+)-dependent Cl(-) channels, but it also serves as a negative feedback signal to desensitize the channel for rapid adaptation to odorants. Conducts cAMP- and cGMP-gated ion currents, with permeability for monovalent and divalent cations. This Mus musculus (Mouse) protein is Cyclic nucleotide-gated channel alpha-2.